The sequence spans 60 residues: Large ribosomal subunit protein bL32 (60 aa).

Over residues 1–16 (MAVPRRKTSPSRRGMR) the composition is skewed to basic residues. Residues 1-60 (MAVPRRKTSPSRRGMRRSADALKRPTYAEDKDSGELRRPHHLDLKTGMYKGRQVIKKKDA) form a disordered region. Residues 17–44 (RSADALKRPTYAEDKDSGELRRPHHLDL) show a composition bias toward basic and acidic residues.

This sequence belongs to the bacterial ribosomal protein bL32 family.

The chain is Large ribosomal subunit protein bL32 from Rhodopseudomonas palustris (strain BisB5).